Here is a 301-residue protein sequence, read N- to C-terminus: Ribonuclease Z (301 aa).

Histidine 60, histidine 62, aspartate 64, histidine 65, histidine 137, aspartate 207, and histidine 265 together coordinate Zn(2+). Aspartate 64 serves as the catalytic Proton acceptor.

The protein belongs to the RNase Z family. Homodimer. It depends on Zn(2+) as a cofactor.

It carries out the reaction Endonucleolytic cleavage of RNA, removing extra 3' nucleotides from tRNA precursor, generating 3' termini of tRNAs. A 3'-hydroxy group is left at the tRNA terminus and a 5'-phosphoryl group is left at the trailer molecule.. Functionally, zinc phosphodiesterase, which displays some tRNA 3'-processing endonuclease activity. Probably involved in tRNA maturation, by removing a 3'-trailer from precursor tRNA. The polypeptide is Ribonuclease Z (Exiguobacterium sibiricum (strain DSM 17290 / CCUG 55495 / CIP 109462 / JCM 13490 / 255-15)).